Consider the following 169-residue polypeptide: Regulator of sigma D (169 aa).

It belongs to the Rsd/AlgQ family. Interacts with RpoD.

The protein localises to the cytoplasm. Binds RpoD and negatively regulates RpoD-mediated transcription activation by preventing the interaction between the primary sigma factor RpoD with the catalytic core of the RNA polymerase and with promoter DNA. May be involved in replacement of the RNA polymerase sigma subunit from RpoD to RpoS during the transition from exponential growth to the stationary phase. The chain is Regulator of sigma D from Yersinia pseudotuberculosis serotype O:1b (strain IP 31758).